A 116-amino-acid chain; its full sequence is Large ribosomal subunit protein eL22A (116 aa).

This sequence belongs to the eukaryotic ribosomal protein eL22 family.

The sequence is that of Large ribosomal subunit protein eL22A (rpl22) from Dictyostelium discoideum (Social amoeba).